A 91-amino-acid chain; its full sequence is DKRTKKVGIVGKYGVRYGASLRKTIKKIEISQHAKYNCNFCGKDSLKRKAAGIWECKACKKVVAGGAYVCSTTAATTIRAAIRRLRDAHES.

Residues 38 to 59 form a C4-type zinc finger; that stretch reads CNFCGKDSLKRKAAGIWECKAC.

The protein belongs to the eukaryotic ribosomal protein eL43 family.

The sequence is that of Large ribosomal subunit protein eL43 from Schistosoma mansoni (Blood fluke).